The chain runs to 284 residues: Bifunctional protein FolD (284 aa).

Residues G165–S167 and S190 contribute to the NADP(+) site.

Belongs to the tetrahydrofolate dehydrogenase/cyclohydrolase family. Homodimer.

The enzyme catalyses (6R)-5,10-methylene-5,6,7,8-tetrahydrofolate + NADP(+) = (6R)-5,10-methenyltetrahydrofolate + NADPH. The catalysed reaction is (6R)-5,10-methenyltetrahydrofolate + H2O = (6R)-10-formyltetrahydrofolate + H(+). It participates in one-carbon metabolism; tetrahydrofolate interconversion. In terms of biological role, catalyzes the oxidation of 5,10-methylenetetrahydrofolate to 5,10-methenyltetrahydrofolate and then the hydrolysis of 5,10-methenyltetrahydrofolate to 10-formyltetrahydrofolate. The protein is Bifunctional protein FolD of Streptococcus gordonii (strain Challis / ATCC 35105 / BCRC 15272 / CH1 / DL1 / V288).